The sequence spans 281 residues: Polyamine aminopropyltransferase (281 aa).

Residues D2–K236 enclose the PABS domain. Q31 lines the S-methyl-5'-thioadenosine pocket. 2 residues coordinate spermidine: H62 and D86. S-methyl-5'-thioadenosine-binding positions include E106 and D138–G139. The active-site Proton acceptor is the D156. D156–D159 lines the spermidine pocket.

This sequence belongs to the spermidine/spermine synthase family. As to quaternary structure, homodimer or homotetramer.

It is found in the cytoplasm. The catalysed reaction is S-adenosyl 3-(methylsulfanyl)propylamine + putrescine = S-methyl-5'-thioadenosine + spermidine + H(+). Its pathway is amine and polyamine biosynthesis; spermidine biosynthesis; spermidine from putrescine: step 1/1. In terms of biological role, catalyzes the irreversible transfer of a propylamine group from the amino donor S-adenosylmethioninamine (decarboxy-AdoMet) to putrescine (1,4-diaminobutane) to yield spermidine. The polypeptide is Polyamine aminopropyltransferase (Clostridium tetani (strain Massachusetts / E88)).